We begin with the raw amino-acid sequence, 624 residues long: Chaperone protein HtpG (624 aa).

Residues 1–336 (MKGQETRGFQ…SNDLPLNVSR (336 aa)) form an a; substrate-binding region. Residues 337 to 552 (EILQDSTVTR…ADEMGTQMAK (216 aa)) form a b region. The segment at 553 to 624 (LFAAAGQAMP…IKRVNALLLG (72 aa)) is c.

The protein belongs to the heat shock protein 90 family. As to quaternary structure, homodimer.

Its subcellular location is the cytoplasm. In terms of biological role, molecular chaperone. Has ATPase activity. In Enterobacter sp. (strain 638), this protein is Chaperone protein HtpG.